The primary structure comprises 601 residues: Glutathione-regulated potassium-efflux system protein KefB (601 aa).

Transmembrane regions (helical) follow at residues Ala4–Ala24, Ile29–Phe49, Glu55–Leu75, Ile87–Met107, Phe111–Ala131, Val152–Gly172, His177–Gly197, Phe207–Ser227, Leu230–Leu250, Ala262–Leu282, Leu284–Ile304, Met324–Ala344, and Ala356–Ile376. One can recognise an RCK N-terminal domain in the interval Lys400–Thr519.

This sequence belongs to the monovalent cation:proton antiporter 2 (CPA2) transporter (TC 2.A.37) family. KefB subfamily. In terms of assembly, interacts with the regulatory subunit KefG.

The protein resides in the cell inner membrane. Functionally, pore-forming subunit of a potassium efflux system that confers protection against electrophiles. Catalyzes K(+)/H(+) antiport. This Salmonella typhi protein is Glutathione-regulated potassium-efflux system protein KefB.